The following is a 275-amino-acid chain: 2-dehydro-3-deoxyphosphooctonate aldolase (275 aa).

Belongs to the KdsA family.

Its subcellular location is the cytoplasm. The enzyme catalyses D-arabinose 5-phosphate + phosphoenolpyruvate + H2O = 3-deoxy-alpha-D-manno-2-octulosonate-8-phosphate + phosphate. It participates in carbohydrate biosynthesis; 3-deoxy-D-manno-octulosonate biosynthesis; 3-deoxy-D-manno-octulosonate from D-ribulose 5-phosphate: step 2/3. Its pathway is bacterial outer membrane biogenesis; lipopolysaccharide biosynthesis. This chain is 2-dehydro-3-deoxyphosphooctonate aldolase, found in Protochlamydia amoebophila (strain UWE25).